Consider the following 227-residue polypeptide: Probable septum site-determining protein MinC (227 aa).

The protein belongs to the MinC family. In terms of assembly, interacts with MinD and FtsZ.

Functionally, cell division inhibitor that blocks the formation of polar Z ring septums. Rapidly oscillates between the poles of the cell to destabilize FtsZ filaments that have formed before they mature into polar Z rings. Prevents FtsZ polymerization. The protein is Probable septum site-determining protein MinC of Shouchella clausii (strain KSM-K16) (Alkalihalobacillus clausii).